A 474-amino-acid chain; its full sequence is Probable aspartate--tRNA ligase, cytoplasmic (474 aa).

Glutamate 203 is an L-aspartate binding site. The tract at residues 225–228 (QLYK) is aspartate. Arginine 247 is a binding site for L-aspartate. ATP-binding positions include 247 to 249 (RAE), 255 to 257 (RYL), and glutamate 397. The L-aspartate site is built by serine 400 and arginine 404. Residue 445–448 (GLER) coordinates ATP.

The protein belongs to the class-II aminoacyl-tRNA synthetase family. Type 2 subfamily. In terms of assembly, homodimer.

It is found in the cytoplasm. It catalyses the reaction tRNA(Asp) + L-aspartate + ATP = L-aspartyl-tRNA(Asp) + AMP + diphosphate. This Enterocytozoon bieneusi (strain H348) (Microsporidian parasite) protein is Probable aspartate--tRNA ligase, cytoplasmic.